The sequence spans 1057 residues: Atrial natriuretic peptide receptor 1 (1057 aa).

A signal peptide spans 1-28 (MPGSRRVRPRLRALLLLPPLLLLRSGHA). Over 29-469 (SDLTVAVVLP…CNQDHFSTLE (441 aa)) the chain is Extracellular. An N-linked (GlcNAc...) asparagine glycan is attached at Asn41. The chloride site is built by Ser81, Gly113, and Cys114. 2 disulfides stabilise this stretch: Cys88/Cys114 and Cys192/Cys241. N-linked (GlcNAc...) asparagine glycans are attached at residues Asn208, Asn334, Asn375, Asn382, and Asn423. The cysteines at positions 451 and 460 are disulfide-linked. The helical transmembrane segment at 470-490 (VLALVGSLSLVSFLIVSFFIY) threads the bilayer. Topologically, residues 491 to 1057 (RKMQLEKELV…LGERGCSTRG (567 aa)) are cytoplasmic. Residues Ser515 and Ser525 each carry the phosphoserine modification. One can recognise a Protein kinase domain in the interval 524 to 801 (GSRLTLSGRG…QIRLALRKFN (278 aa)). The residue at position 528 (Thr528) is a Phosphothreonine. Phosphoserine is present on residues Ser530, Ser534, and Ser538. Position 541 is a phosphothreonine (Thr541). The 131-residue stretch at 872–1002 (TIYFSDIVGF…DTVNTASRME (131 aa)) folds into the Guanylate cyclase domain.

It belongs to the adenylyl cyclase class-4/guanylyl cyclase family. Homodimer. Phosphorylation of the protein kinase-like domain is required for full activation by ANP.

It is found in the membrane. The enzyme catalyses GTP = 3',5'-cyclic GMP + diphosphate. Its function is as follows. Receptor for the atrial natriuretic peptide NPPA/ANP and the brain natriuretic peptide NPPB/BNP which are potent vasoactive hormones playing a key role in cardiovascular homeostasis. Plays an essential role in the regulation of endothelial cell senescence and vascular aging. Upon activation by ANP or BNP, stimulates the production of cyclic guanosine monophosphate (cGMP) that promotes vascular tone and volume homeostasis by activation of protein kinase cGMP-dependent 1/PRKG1 and subsequently PRKAA1, thereby controlling blood pressure and maintaining cardiovascular homeostasis. The sequence is that of Atrial natriuretic peptide receptor 1 (Npr1) from Mus musculus (Mouse).